The primary structure comprises 585 residues: Eukaryotic translation initiation factor 3 subunit D (585 aa).

A compositionally biased stretch (basic and acidic residues) spans 43 to 60 (LGRMADWTGDGKDRDRGG). Disordered regions lie at residues 43–62 (LGRMADWTGDGKDRDRGGRQ) and 109–152 (RGGG…NRSA). Residues 109-130 (RGGGTVFRGRGQRGVGQRGGRA) are compositionally biased toward gly residues. Positions 300–314 (SIDLVTVNENAADAP) are RNA gate. The tract at residues 560-585 (VPPNTFEEDDEAAEEQEEKAEEESEE) is disordered. Residues 565-585 (FEEDDEAAEEQEEKAEEESEE) are compositionally biased toward acidic residues.

The protein belongs to the eIF-3 subunit D family. Component of the eukaryotic translation initiation factor 3 (eIF-3) complex.

Its subcellular location is the cytoplasm. Functionally, mRNA cap-binding component of the eukaryotic translation initiation factor 3 (eIF-3) complex, which is involved in protein synthesis of a specialized repertoire of mRNAs and, together with other initiation factors, stimulates binding of mRNA and methionyl-tRNAi to the 40S ribosome. The eIF-3 complex specifically targets and initiates translation of a subset of mRNAs involved in cell proliferation. In the eIF-3 complex, eif3d specifically recognizes and binds the 7-methylguanosine cap of a subset of mRNAs. This chain is Eukaryotic translation initiation factor 3 subunit D, found in Neosartorya fischeri (strain ATCC 1020 / DSM 3700 / CBS 544.65 / FGSC A1164 / JCM 1740 / NRRL 181 / WB 181) (Aspergillus fischerianus).